The sequence spans 391 residues: MFPNGTASSPSSPSPSPGSCGEGGGSRGPGAGAADGMEEPGRNASQNGTLSEGQGSAILISFIYSVVCLVGLCGNSMVIYVILRYAKMKTATNIYILNLAIADELLMLSVPFLVTSTLLRHWPFGALLCRLVLSVDAVNMFTSIYCLTVLSVDRYVAVVHPIKAARYRRPTVAKVVNLGVWVLSLLVILPIVVFSRTAANSDGTVACNMLMPEPAQRWLVGFVLYTFLMGFLLPVGAICLCYVLIIAKMRMVALKAGWQQRKRSERKITLMVMMVVMVFVICWMPFYVVQLVNVFAEQDDATVSQLSVILGYANSCANPILYGFLSDNFKRSFQRILCLSWMDNAAEEPVDYYATALKSRAYSVEDFQPENLESGGAVFRNGTCTSRITTL.

Over residues 1–11 (MFPNGTASSPS) the composition is skewed to low complexity. The interval 1-49 (MFPNGTASSPSSPSPSPGSCGEGGGSRGPGAGAADGMEEPGRNASQNGT) is disordered. Topologically, residues 1–55 (MFPNGTASSPSSPSPSPGSCGEGGGSRGPGAGAADGMEEPGRNASQNGTLSEGQG) are extracellular. N-linked (GlcNAc...) asparagine glycosylation occurs at N4. The segment covering 20–33 (CGEGGGSRGPGAGA) has biased composition (gly residues). N-linked (GlcNAc...) asparagine glycosylation is found at N43 and N47. Residues 56–83 (SAILISFIYSVVCLVGLCGNSMVIYVIL) traverse the membrane as a helical segment. Residues 84–93 (RYAKMKTATN) lie on the Cytoplasmic side of the membrane. A helical membrane pass occupies residues 94 to 119 (IYILNLAIADELLMLSVPFLVTSTLL). The Extracellular segment spans residues 120-130 (RHWPFGALLCR). C129 and C207 form a disulfide bridge. The chain crosses the membrane as a helical span at residues 131–152 (LVLSVDAVNMFTSIYCLTVLSV). Residues 153–174 (DRYVAVVHPIKAARYRRPTVAK) are Cytoplasmic-facing. Residues 175-195 (VVNLGVWVLSLLVILPIVVFS) form a helical membrane-spanning segment. Over 196–218 (RTAANSDGTVACNMLMPEPAQRW) the chain is Extracellular. Residues 219 to 243 (LVGFVLYTFLMGFLLPVGAICLCYV) form a helical membrane-spanning segment. The Cytoplasmic segment spans residues 244–269 (LIIAKMRMVALKAGWQQRKRSERKIT). The helical transmembrane segment at 270–295 (LMVMMVVMVFVICWMPFYVVQLVNVF) threads the bilayer. Over 296 to 302 (AEQDDAT) the chain is Extracellular. A helical transmembrane segment spans residues 303-326 (VSQLSVILGYANSCANPILYGFLS). Residues 327–391 (DNFKRSFQRI…GTCTSRITTL (65 aa)) are Cytoplasmic-facing. Residue C338 is the site of S-palmitoyl cysteine attachment.

This sequence belongs to the G-protein coupled receptor 1 family. As to quaternary structure, interacts with SKB1.

Its subcellular location is the cell membrane. In terms of biological role, receptor for somatostatin with higher affinity for somatostatin-14 than -28. This receptor is coupled via pertussis toxin sensitive G proteins to inhibition of adenylyl cyclase. In addition it stimulates phosphotyrosine phosphatase and Na(+)/H(+) exchanger via pertussis toxin insensitive G proteins. This chain is Somatostatin receptor type 1 (SSTR1), found in Canis lupus familiaris (Dog).